Consider the following 1883-residue polypeptide: MGKRAGGGATGATTAAVSTSAGAGLEPAAARSGGPRSAAAGLLGALHLVMTLVVAAARAEKEAFVQSESIIEVLRFDDGGLLQTETTLGLSSYQQKSISLYRGNCRPIRFEPPMLDFHEQPVGMPKMEKVYLHNPSSEETITLVSISATTSHFHASFFQNRKILPGGNTSFDVVFLARVVGNVENTLFINTSNHGVFTYQVFGVGVPNPYRLRPFLGARVPVNSSFSPIINIHNPHSEPLQVVEMYSSGGDLHLELPTGQQGGTRKLWEIPPYETKGVMRASFSSREADNHTAFIRIKTNASDSTEFIILPVEVEVTTAPGIYSSTEMLDFGTLRTQDLPKVLNLHLLNSGTKDVPITSVRPTPQNDAITVHFKPITLKASESKYTKVASISFDASKAKKPSQFSGKITVKAKEKSYSKLEIPYQAEVLDGYLGFDHAATLFHIRDSPADPVERPIYLTNTFSFAILIHDVLLPEEAKTMFKVHNFSKPVLILPNESGYIFTLLFMPSTSSMHIDNNILLITNASKFHLPVRVYTGFLDYFVLPPKIEERFIDFGVLSATEASNILFAIINSNPIELAIKSWHIIGDGLSIELVAVERGNRTTIISSLPEFEKSSLSDQSSVTLASGYFAVFRVKLTAKKLEGIHDGAIQITTDYEILTIPVKAVIAVGSLTCFPKHVVLPPSFPGKIVHQSLNIMNSFSQKVKIQQIRSLSEDVRFYYKRLRGNKEDLEPGKKSKIANIYFDPGLQCGDHCYVGLPFLSKSEPKVQPGVAMQEDMWDADWDLHQSLFKGWTGIKENSGHRLSAIFEVNTDLQKNIISKITAELSWPSILSSPRHLKFPLTNTNCSSEEEITLENPADVPVYVQFIPLALYSNPSVFVDKLVSRFNLSKVAKIDLRTLEFQVFRNSAHPLQSSTGFMEGLSRHLILNLILKPGEKKSVKVKFTPVHNRTVSSLIIVRNNLTVMDAVMVQGQGTTENLRVAGKLPGPGSSLRFKITEALLKDCTDSLKLREPNFTLKRTFKVENTGQLQIHIETIEISGYSCEGYGFKVVNCQEFTLSANASRDIIILFTPDFTASRVIRELKFITTSGSEFVFILNASLPYHMLATCAEALPRPNWELALYIIISGIMSALFLLVIGTAYLEAQGIWEPFRRRLSFEASNPPFDVGRPFDLRRIVGISSEGNLNTLSCDPGHSRGFCGAGGSSSRPSAGSHKQCGPSVHPHSSHSNRNSADVENVRAKNSSSTSSRTSAQAASSQSANKTSPLVLDSNTVTQGHTAGRKSKGAKQSQHGSQHHAHSPLEQHPQPPLPPPVPQPQEPQPERLSPAPLAHPSHPERASSARHSSEDSDITSLIEAMDKDFDHHDSPALEVFTEQPPSPLPKSKGKGKPLQRKVKPPKKQEEKEKKGKGKPQEDELKDSLADDDSSSTTTETSNPDTEPLLKEDTEKQKGKQAMPEKHESEMSQVKQKSKKLLNIKKEIPTDVKPSSLELPYTPPLESKQRRNLPSKIPLPTAMTSGSKSRNAQKTKGTSKLVDNRPPALAKFLPNSQELGNTSSSEGEKDSPPPEWDSVPVHKPGSSTDSLYKLSLQTLNADIFLKQRQTSPTPASPSPPAAPCPFVARGSYSSIVNSSSSSDPKIKQPNGSKHKLTKAASLPGKNGNPTFAAVTAGYDKSPGGNGFAKVSSNKTGFSSSLGISHAPVDSDGSDSSGLWSPVSNPSSPDFTPLNSFSAFGNSFNLTGEVFSKLGLSRSCNQASQRSWNEFNSGPSYLWESPATDPSPSWPASSGSPTHTATSVLGNTSGLWSTTPFSSSIWSSNLSSALPFTTPANTLASIGLMGTENSPAPHAPSTSSPADDLGQTYNPWRIWSPTIGRRSSDPWSNSHFPHEN.

Positions 1–22 (MGKRAGGGATGATTAAVSTSAG) are cleaved as a signal peptide. At 23–1117 (AGLEPAAARS…AEALPRPNWE (1095 aa)) the chain is on the lumenal side. A papD-L domain region spans residues 109-283 (RFEPPMLDFH…ETKGVMRASF (175 aa)). Asn-300 carries an N-linked (GlcNAc...) asparagine glycan. Ser-803 carries the phosphoserine modification. The chain crosses the membrane as a helical span at residues 1118–1138 (LALYIIISGIMSALFLLVIGT). At 1139-1883 (AYLEAQGIWE…WSNSHFPHEN (745 aa)) the chain is on the cytoplasmic side. 5 disordered regions span residues 1198–1580 (GAGG…DSLY), 1593–1656 (LKQR…KNGN), 1670–1712 (PGGN…PVSN), 1766–1789 (WESPATDPSPSWPASSGSPTHTAT), and 1832–1858 (MGTENSPAPHAPSTSSPADDLGQTYNP). Over residues 1237–1261 (AKNSSSTSSRTSAQAASSQSANKTS) the composition is skewed to low complexity. Residues 1302 to 1316 (PQPPLPPPVPQPQEP) show a composition bias toward pro residues. Ser-1322 and Ser-1342 each carry phosphoserine. Composition is skewed to basic and acidic residues over residues 1330–1343 (SHPERASSARHSSE) and 1353–1364 (AMDKDFDHHDSP). Ser-1375 carries the phosphoserine modification. The segment covering 1380–1394 (SKGKGKPLQRKVKPP) has biased composition (basic residues). Basic and acidic residues predominate over residues 1395–1417 (KKQEEKEKKGKGKPQEDELKDSL). Residues 1423-1434 (SSTTTETSNPDT) are compositionally biased toward low complexity. Basic and acidic residues predominate over residues 1436–1458 (PLLKEDTEKQKGKQAMPEKHESE). Polar residues-rich tracts occupy residues 1510–1526 (AMTSGSKSRNAQKTKGT) and 1542–1553 (PNSQELGNTSSS). The span at 1602 to 1611 (PASPSPPAAP) shows a compositional bias: pro residues. Over residues 1619 to 1630 (SYSSIVNSSSSS) the composition is skewed to low complexity. The segment covering 1678 to 1690 (VSSNKTGFSSSLG) has biased composition (polar residues). 2 stretches are compositionally biased toward low complexity: residues 1773–1784 (PSPSWPASSGSP) and 1837–1849 (SPAPHAPSTSSPA). Phosphoserine is present on residues Ser-1863 and Ser-1871.

Belongs to the TMEM131 family. As to quaternary structure, interacts (via PapD-L domain) with COL1A2 (via C-terminus); the interaction is direct, may occur with other collagen proteins, and is involved in assembly and TRAPPIII ER-to-Golgi transport complex-dependent secretion of collagen. Interacts (via C-terminus) with TRAPPC8 (via C-terminus); the interaction is direct.

It localises to the membrane. Functionally, collagen binding transmembrane protein involved in collagen secretion by recruiting the ER-to-Golgi transport complex TRAPPIII. May play a role in the immune response to viral infection. This Homo sapiens (Human) protein is Transmembrane protein 131.